Here is a 1185-residue protein sequence, read N- to C-terminus: Ubiquitin carboxyl-terminal hydrolase 36 (1185 aa).

Residues 126–169 (TGKALSSNGHDNTNGVNGSSAATVNGNRKQTVEQSNQNSTTNPN) are compositionally biased toward polar residues. The tract at residues 126-174 (TGKALSSNGHDNTNGVNGSSAATVNGNRKQTVEQSNQNSTTNPNELPKP) is disordered. The 311-residue stretch at 199–509 (AGMLNVGNTC…NAYIMFYELD (311 aa)) folds into the USP domain. The active-site Nucleophile is the Cys-208. The active-site Proton acceptor is the His-468. Residues Ser-552 and Ser-554 each carry the phosphoserine modification. Over residues 642 to 658 (ANSNKSSCNNNTLTTNS) the composition is skewed to low complexity. Disordered regions lie at residues 642–804 (ANSN…TDAI), 818–975 (HRAT…YQSE), 1056–1122 (APTL…GSFP), and 1136–1185 (NKFK…QQQS). Acidic residues predominate over residues 670–683 (SDEEDEDEDSDDDV). Thr-716 carries the post-translational modification Phosphothreonine. Ser-726 and Ser-728 each carry phosphoserine. Composition is skewed to low complexity over residues 778-797 (KSNGSGNESSTSTSIKSNNN) and 836-853 (QQQQVTKKPSNSSSSLIS). Ser-867 carries the post-translational modification Phosphoserine. Position 870 is a phosphothreonine (Thr-870). Residue Ser-873 is modified to Phosphoserine. A compositionally biased stretch (acidic residues) spans 891 to 920 (DDNDDDDEDADEEDDADADAEQEEYDDEVV). Composition is skewed to polar residues over residues 924–942 (TTPSITTKNLNNPFASKPS) and 959–975 (SAKSAQTPRVGNGYQSE). Thr-925 is subject to Phosphothreonine. Residues 1062–1071 (EAREQRKRDA) show a composition bias toward basic and acidic residues. Composition is skewed to low complexity over residues 1151-1161 (QQQRALQRHLA) and 1172-1185 (QSTGHQQQQQQQQS).

The protein belongs to the peptidase C19 family. As to quaternary structure, interacts with atms/PAF1, but not with CycT.

The protein localises to the nucleus. Its subcellular location is the nucleolus. It carries out the reaction Thiol-dependent hydrolysis of ester, thioester, amide, peptide and isopeptide bonds formed by the C-terminal Gly of ubiquitin (a 76-residue protein attached to proteins as an intracellular targeting signal).. In terms of biological role, required for maintaining multiple types of adult stem cells, including male and female germline, epithelial follicle cell and intestinal stem cells. May function as a transcriptional repressor by continually deubiquiting histone H2B at the promoters of genes critical for cellular differentiation, thereby preventing histone H3 'Lys-4' trimethylation (H3K4). Controls selective autophagy activation by ubiquitinated proteins. This chain is Ubiquitin carboxyl-terminal hydrolase 36 (Usp36), found in Drosophila mojavensis (Fruit fly).